A 457-amino-acid polypeptide reads, in one-letter code: Cytochrome b-c1 complex subunit 1, mitochondrial (457 aa).

Residues 1 to 26 (MLRTVTSKTVSNQFKRSLATAVATPK) constitute a mitochondrion transit peptide.

This sequence belongs to the peptidase M16 family. UQCRC1/QCR1 subfamily. As to quaternary structure, component of the ubiquinol-cytochrome c oxidoreductase (cytochrome b-c1 complex, complex III, CIII), a multisubunit enzyme composed of 10 subunits. The complex is composed of 3 respiratory subunits cytochrome b (COB), cytochrome c1 (CYT1) and Rieske protein (RIP1), 2 core protein subunits COR1 and QCR2, and 5 low-molecular weight protein subunits QCR6, QCR7, QCR8, QCR9 and QCR10. The complex exists as an obligatory dimer and forms supercomplexes (SCs) in the inner mitochondrial membrane with a monomer or a dimer of cytochrome c oxidase (complex IV, CIV), resulting in 2 different assemblies (supercomplexes III(2)IV and III(2)IV(2)). COR1 interacts with COX5A at the CIII-CIV interface.

The protein localises to the mitochondrion inner membrane. Functionally, component of the ubiquinol-cytochrome c oxidoreductase, a multisubunit transmembrane complex that is part of the mitochondrial electron transport chain which drives oxidative phosphorylation. The respiratory chain contains 3 multisubunit complexes succinate dehydrogenase (complex II, CII), ubiquinol-cytochrome c oxidoreductase (cytochrome b-c1 complex, complex III, CIII) and cytochrome c oxidase (complex IV, CIV), that cooperate to transfer electrons derived from NADH and succinate to molecular oxygen, creating an electrochemical gradient over the inner membrane that drives transmembrane transport and the ATP synthase. The cytochrome b-c1 complex catalyzes electron transfer from ubiquinol to cytochrome c, linking this redox reaction to translocation of protons across the mitochondrial inner membrane, with protons being carried across the membrane as hydrogens on the quinol. In the process called Q cycle, 2 protons are consumed from the matrix, 4 protons are released into the intermembrane space and 2 electrons are passed to cytochrome c. In Saccharomyces cerevisiae (strain ATCC 204508 / S288c) (Baker's yeast), this protein is Cytochrome b-c1 complex subunit 1, mitochondrial (COR1).